The sequence spans 827 residues: Glycerol-3-phosphate acyltransferase (827 aa).

The HXXXXD motif signature appears at 325–330 (CHRSHM).

The protein belongs to the GPAT/DAPAT family.

It localises to the cell inner membrane. It catalyses the reaction sn-glycerol 3-phosphate + an acyl-CoA = a 1-acyl-sn-glycero-3-phosphate + CoA. It functions in the pathway phospholipid metabolism; CDP-diacylglycerol biosynthesis; CDP-diacylglycerol from sn-glycerol 3-phosphate: step 1/3. The polypeptide is Glycerol-3-phosphate acyltransferase (Escherichia coli (strain SMS-3-5 / SECEC)).